Reading from the N-terminus, the 361-residue chain is Mitogen-activated protein kinase 14 (361 aa).

The Protein kinase domain maps to 32-316; sequence YVPIKPIGRG…VSDALLHPYM (285 aa). Residues 38–46 and lysine 61 each bind ATP; that span reads IGRGAYGVV. Aspartate 158 serves as the catalytic Proton acceptor. A Phosphothreonine modification is found at threonine 188. The TXY signature appears at 188–190; the sequence is TEY. The residue at position 190 (tyrosine 190) is a Phosphotyrosine. Threonine 193 carries the phosphothreonine modification.

This sequence belongs to the protein kinase superfamily. CMGC Ser/Thr protein kinase family. MAP kinase subfamily. As to quaternary structure, interacts with MKK3. In terms of processing, dually phosphorylated on Thr-188 and Tyr-190, which activates the enzyme.

The enzyme catalyses L-seryl-[protein] + ATP = O-phospho-L-seryl-[protein] + ADP + H(+). It carries out the reaction L-threonyl-[protein] + ATP = O-phospho-L-threonyl-[protein] + ADP + H(+). Its activity is regulated as follows. Activated by threonine and tyrosine phosphorylation. The protein is Mitogen-activated protein kinase 14 (MPK14) of Arabidopsis thaliana (Mouse-ear cress).